Consider the following 2090-residue polypeptide: Non-reducing polyketide synthase rdc1 (2090 aa).

The N-terminal acylcarrier protein transacylase (SAT) domain stretch occupies residues 12 to 250 (FLVGDQVDSW…NPLNIHALQH (239 aa)). A Ketosynthase family 3 (KS3) domain is found at 375–808 (TGRIAIVGMS…GGNACLLLED (434 aa)). Active-site for beta-ketoacyl synthase activity residues include Cys551, His686, and His726. The tract at residues 912-1195 (IFVFSGQGSH…NQVCTQFVRA (284 aa)) is malonyl-CoA:ACP transacylase (MAT) domain. The active-site For acyl/malonyl transferase activity is Ser1003. The N-terminal hotdog fold stretch occupies residues 1293–1433 (QHVAKESSSN…LVVQKNVKAL (141 aa)). Residues 1293–1607 (QHVAKESSSN…FVRISNALLQ (315 aa)) enclose the PKS/mFAS DH domain. Residues 1304-1604 (GKLEITFRAS…NLSFVRISNA (301 aa)) are product template (PT) domain. Residues 1459 to 1607 (QGHWLKHDIF…FVRISNALLQ (149 aa)) are C-terminal hotdog fold. A disordered region spans residues 1615 to 1650 (SKPVGRGMAKQEKQEVPATTEVVRQPEKEESRHSVD). Residues 1638–1649 (RQPEKEESRHSV) show a composition bias toward basic and acidic residues. Residues 1649–1726 (VDTPSFSDVL…DIKRAFDILT (78 aa)) form the Carrier domain. Ser1686 carries the O-(pantetheine 4'-phosphoryl)serine modification. The tract at residues 1820–1964 (ADGTGSIATY…THQHLKALFA (145 aa)) is thioesterase (TE) domain.

The protein operates within secondary metabolite biosynthesis. Its function is as follows. Non-reducing polyketide synthase; part of the gene cluster that mediates the biosynthesis of radicicol, a resorcylic acid lactone (RAL) that irreversibly inhibits the HSP90 molecular chaperone, an important target for cancer chemotherapy. The radicicol cluster encodes only two apparent post-PKS enzymes, a cytochrome P450 monooxygenase (rdc4) and a non-heme halogenase (rdc2) that could introduce the epoxide and the chlorine, respectively. If this cluster includes all the genes required for radicicol biosynthesis, the remaining structural features of radicicol are presumably generated by the PKSs rdc1 and rdc5. The C-2' ketone could arise if the R-PKS rdc5 and NR-PKS rdc1 each carry out four iterations, in contrast to the five iteration-three iteration split for the hypothemycin PKSs. The origin of the cis 5',6' double bond is not known. The radicicol R-PKS rdc5 ER domain may catalyze either double bond isomerization or reduction in the third iteration. The polypeptide is Non-reducing polyketide synthase rdc1 (Metacordyceps chlamydosporia (Nematophagous fungus)).